A 152-amino-acid polypeptide reads, in one-letter code: Small ribosomal subunit protein uS8m (152 aa).

It belongs to the universal ribosomal protein uS8 family.

It is found in the mitochondrion. This chain is Small ribosomal subunit protein uS8m (mrps8), found in Dictyostelium citrinum (Slime mold).